Here is a 233-residue protein sequence, read N- to C-terminus: Biosynthetic peptidoglycan transglycosylase (233 aa).

The helical transmembrane segment at 8–28 threads the bilayer; it reads LIALPVGIFIFFNAYVYGNII.

The protein belongs to the glycosyltransferase 51 family.

The protein localises to the cell inner membrane. The catalysed reaction is [GlcNAc-(1-&gt;4)-Mur2Ac(oyl-L-Ala-gamma-D-Glu-L-Lys-D-Ala-D-Ala)](n)-di-trans,octa-cis-undecaprenyl diphosphate + beta-D-GlcNAc-(1-&gt;4)-Mur2Ac(oyl-L-Ala-gamma-D-Glu-L-Lys-D-Ala-D-Ala)-di-trans,octa-cis-undecaprenyl diphosphate = [GlcNAc-(1-&gt;4)-Mur2Ac(oyl-L-Ala-gamma-D-Glu-L-Lys-D-Ala-D-Ala)](n+1)-di-trans,octa-cis-undecaprenyl diphosphate + di-trans,octa-cis-undecaprenyl diphosphate + H(+). It functions in the pathway cell wall biogenesis; peptidoglycan biosynthesis. In terms of biological role, peptidoglycan polymerase that catalyzes glycan chain elongation from lipid-linked precursors. The polypeptide is Biosynthetic peptidoglycan transglycosylase (Neisseria meningitidis serogroup A / serotype 4A (strain DSM 15465 / Z2491)).